The chain runs to 528 residues: Na(+)/H(+) antiporter NhaB (528 aa).

10 helical membrane-spanning segments follow: residues 11-31 (VNFL…FLVI), 67-87 (PGGL…SQVL), 98-118 (LLLI…LFVF), 140-160 (AFLS…AVGI), 240-260 (FFIR…LTCV), 311-331 (LVAG…SVII), 350-370 (EEAL…GVII), 391-411 (LVVF…VFVG), 449-469 (ATPN…APLI), and 476-496 (MVIM…VTIE).

The protein belongs to the NhaB Na(+)/H(+) (TC 2.A.34) antiporter family.

It localises to the cell inner membrane. The catalysed reaction is 2 Na(+)(in) + 3 H(+)(out) = 2 Na(+)(out) + 3 H(+)(in). Its function is as follows. Na(+)/H(+) antiporter that extrudes sodium in exchange for external protons. In Shewanella denitrificans (strain OS217 / ATCC BAA-1090 / DSM 15013), this protein is Na(+)/H(+) antiporter NhaB.